Reading from the N-terminus, the 476-residue chain is Eukaryotic translation initiation factor 3 subunit L (476 aa).

The 196-residue stretch at 257-452 (DAIRMFSHIL…DLDYALENDL (196 aa)) folds into the PCI domain.

It belongs to the eIF-3 subunit L family. As to quaternary structure, component of the eukaryotic translation initiation factor 3 (eIF-3) complex.

Its subcellular location is the cytoplasm. Component of the eukaryotic translation initiation factor 3 (eIF-3) complex, which is involved in protein synthesis of a specialized repertoire of mRNAs and, together with other initiation factors, stimulates binding of mRNA and methionyl-tRNAi to the 40S ribosome. The eIF-3 complex specifically targets and initiates translation of a subset of mRNAs involved in cell proliferation. In Aspergillus niger (strain ATCC MYA-4892 / CBS 513.88 / FGSC A1513), this protein is Eukaryotic translation initiation factor 3 subunit L.